Consider the following 317-residue polypeptide: Sulfate adenylyltransferase subunit 2 (317 aa).

Residues 1-10 are compositionally biased toward basic and acidic residues; the sequence is MSNAVHETDS. Disordered regions lie at residues 1 to 21 and 298 to 317; these read MSNAVHETDSKNTVASKPPLD and RAIDRDQSGSMEKKKREGYF.

This sequence belongs to the PAPS reductase family. CysD subfamily. Heterodimer composed of CysD, the smaller subunit, and CysN.

It carries out the reaction sulfate + ATP + H(+) = adenosine 5'-phosphosulfate + diphosphate. It participates in sulfur metabolism; hydrogen sulfide biosynthesis; sulfite from sulfate: step 1/3. Its function is as follows. With CysN forms the ATP sulfurylase (ATPS) that catalyzes the adenylation of sulfate producing adenosine 5'-phosphosulfate (APS) and diphosphate, the first enzymatic step in sulfur assimilation pathway. APS synthesis involves the formation of a high-energy phosphoric-sulfuric acid anhydride bond driven by GTP hydrolysis by CysN coupled to ATP hydrolysis by CysD. The chain is Sulfate adenylyltransferase subunit 2 from Agrobacterium fabrum (strain C58 / ATCC 33970) (Agrobacterium tumefaciens (strain C58)).